A 404-amino-acid polypeptide reads, in one-letter code: Glycosylated lysosomal membrane protein (404 aa).

Residues 1-26 (MSGYEKPSRGWGFCALSPVLLSLLMA) form the signal peptide. The Lumenal portion of the chain corresponds to 27–370 (APLGLLGEET…VDALSPLVLG (344 aa)). 5 N-linked (GlcNAc...) asparagine glycosylation sites follow: Asn-63, Asn-132, Asn-157, Asn-185, and Asn-228. A helical transmembrane segment spans residues 371 to 391 (IMAVALGAPALMLLAGGLFLL). Topologically, residues 392–404 (LGRKRDSEYQSIN) are cytoplasmic. The Lysosomal targeting motif motif lies at 400 to 404 (YQSIN).

The protein belongs to the GLMP family. As to quaternary structure, interacts (via lumenal domain) with lysosomal protein MFSD1; the interaction starts while both proteins are still in the endoplasmic reticulum and is required for stabilization of MFSD1 in lysosomes but has no direct effect on its targeting to lysosomes or transporter activity. Highly N-glycosylated. N-glycosylation is essential for GLMP stability and for MFSD1 lysosomal localization.

It localises to the lysosome membrane. Its function is as follows. Required to protect lysosomal transporter MFSD1 from lysosomal proteolysis and for MFSD1 lysosomal localization. This Bos taurus (Bovine) protein is Glycosylated lysosomal membrane protein.